A 124-amino-acid polypeptide reads, in one-letter code: Large ribosomal subunit protein bL12 (124 aa).

Belongs to the bacterial ribosomal protein bL12 family. In terms of assembly, homodimer. Part of the ribosomal stalk of the 50S ribosomal subunit. Forms a multimeric L10(L12)X complex, where L10 forms an elongated spine to which 2 to 4 L12 dimers bind in a sequential fashion. Binds GTP-bound translation factors.

Its function is as follows. Forms part of the ribosomal stalk which helps the ribosome interact with GTP-bound translation factors. Is thus essential for accurate translation. The chain is Large ribosomal subunit protein bL12 from Christiangramia forsetii (strain DSM 17595 / CGMCC 1.15422 / KT0803) (Gramella forsetii).